A 162-amino-acid chain; its full sequence is RNA pyrophosphohydrolase (162 aa).

The Nudix hydrolase domain occupies 7 to 149 (EYRPCVGIML…KKEVYKKVIE (143 aa)). Positions 40 to 61 (GGVDEGEELEQAALRELLEEVG) match the Nudix box motif.

It belongs to the Nudix hydrolase family. RppH subfamily. A divalent metal cation serves as cofactor.

In terms of biological role, accelerates the degradation of transcripts by removing pyrophosphate from the 5'-end of triphosphorylated RNA, leading to a more labile monophosphorylated state that can stimulate subsequent ribonuclease cleavage. This chain is RNA pyrophosphohydrolase, found in Wolbachia pipientis subsp. Culex pipiens (strain wPip).